A 391-amino-acid chain; its full sequence is tRNA (cytosine(38)-C(5))-methyltransferase (391 aa).

An SAM-dependent MTase C5-type domain is found at 4–391; sequence LRVLELYSGV…VAKLIKILYE (388 aa). S-adenosyl-L-methionine is bound by residues 13 to 15, D34, 57 to 58, and S76; these read VGG and IE. C79 is a catalytic residue. S376 contributes to the S-adenosyl-L-methionine binding site.

The protein belongs to the class I-like SAM-binding methyltransferase superfamily. C5-methyltransferase family. As to expression, ubiquitous. Higher expression in testis, ovary and thymus and at much lower levels in spleen, prostate, colon, small intestine, and peripheral blood leukocytes.

The protein resides in the cytoplasm. It catalyses the reaction cytidine(38) in tRNA + S-adenosyl-L-methionine = 5-methylcytidine(38) in tRNA + S-adenosyl-L-homocysteine + H(+). In terms of biological role, specifically methylates cytosine 38 in the anticodon loop of tRNA(Asp). Has higher activity on tRNA(Asp) modified with queuosine at position 34. In Homo sapiens (Human), this protein is tRNA (cytosine(38)-C(5))-methyltransferase (TRDMT1).